We begin with the raw amino-acid sequence, 126 residues long: Small ribosomal subunit protein uS8 (126 aa).

It belongs to the universal ribosomal protein uS8 family. As to quaternary structure, part of the 30S ribosomal subunit. Contacts proteins S5 and S12.

One of the primary rRNA binding proteins, it binds directly to 16S rRNA central domain where it helps coordinate assembly of the platform of the 30S subunit. The chain is Small ribosomal subunit protein uS8 from Desulfovibrio desulfuricans (strain ATCC 27774 / DSM 6949 / MB).